Consider the following 332-residue polypeptide: Thiosulfate-binding protein (332 aa).

Positions 1–22 (MKRLFSASLLAAGLALGGAAHA) are cleaved as a signal peptide.

It belongs to the prokaryotic sulfate-binding protein family.

Its subcellular location is the periplasm. Binds thiosulfate specifically and with high affinity. Has no detectable affinity for sulfate. The polypeptide is Thiosulfate-binding protein (Pseudomonas aeruginosa (strain ATCC 15692 / DSM 22644 / CIP 104116 / JCM 14847 / LMG 12228 / 1C / PRS 101 / PAO1)).